The primary structure comprises 195 residues: Large ribosomal subunit protein uL18 (195 aa).

Belongs to the universal ribosomal protein uL18 family. In terms of assembly, part of the 50S ribosomal subunit. Contacts the 5S and 23S rRNAs.

This is one of the proteins that bind and probably mediate the attachment of the 5S RNA into the large ribosomal subunit, where it forms part of the central protuberance. The polypeptide is Large ribosomal subunit protein uL18 (Nanoarchaeum equitans (strain Kin4-M)).